We begin with the raw amino-acid sequence, 116 residues long: CDKN2AIP N-terminal-like protein (116 aa).

Position 1 is an N-acetylmethionine (M1). One can recognise an XRN2-binding (XTBD) domain in the interval 24 to 116; sequence AEQFRSYSES…RSELMKKHQS (93 aa).

Belongs to the CARF family. In terms of assembly, interacts with XRN2; the interaction is direct.

The sequence is that of CDKN2AIP N-terminal-like protein (Cdkn2aipnl) from Rattus norvegicus (Rat).